Here is a 115-residue protein sequence, read N- to C-terminus: NADH-ubiquinone oxidoreductase chain 3 (115 aa).

3 helical membrane-spanning segments follow: residues 4–24, 55–75, and 84–104; these read LLVI…AFWL, FFLV…LLPI, and INMV…GLAY.

Belongs to the complex I subunit 3 family. As to quaternary structure, core subunit of respiratory chain NADH dehydrogenase (Complex I) which is composed of 45 different subunits. Interacts with TMEM186. Interacts with TMEM242.

It is found in the mitochondrion inner membrane. It catalyses the reaction a ubiquinone + NADH + 5 H(+)(in) = a ubiquinol + NAD(+) + 4 H(+)(out). Functionally, core subunit of the mitochondrial membrane respiratory chain NADH dehydrogenase (Complex I) which catalyzes electron transfer from NADH through the respiratory chain, using ubiquinone as an electron acceptor. Essential for the catalytic activity of complex I. The sequence is that of NADH-ubiquinone oxidoreductase chain 3 from Ochrotomys nuttalli (Golden mouse).